A 501-amino-acid polypeptide reads, in one-letter code: ADP,ATP carrier protein 3 (501 aa).

The next 12 helical transmembrane spans lie at 23–43 (LKLF…FGAL), 59–79 (IISF…TVLY), 90–110 (YIFY…AYII), 146–166 (YALM…LMFW), 183–203 (PVLG…LVFF), 227–247 (IMLQ…MLLF), 293–313 (IALL…PWKA), 326–346 (VNFM…FMII), 361–381 (LLTP…IIFI), 387–407 (CFGD…QNIL), 446–466 (FGKS…PTAT), and 470–490 (IIIY…WNVI).

It belongs to the ADP/ATP translocase tlc family.

Its subcellular location is the cell membrane. Functionally, provides the rickettsial cell with host ATP in exchange for rickettsial ADP. This is an obligate exchange system. This energy acquiring activity is an important component of rickettsial parasitism. In Rickettsia conorii (strain ATCC VR-613 / Malish 7), this protein is ADP,ATP carrier protein 3 (tlcC).